The primary structure comprises 125 residues: Protein ApaG (125 aa).

An ApaG domain is found at 1 to 125; the sequence is MINSPRVCVQ…FRLAIPSLIN (125 aa).

This chain is Protein ApaG, found in Sodalis glossinidius (strain morsitans).